We begin with the raw amino-acid sequence, 144 residues long: Elicitor-responsive protein 3 (144 aa).

Positions methionine 1–valine 103 constitute a C2 domain. 5 residues coordinate Ca(2+): aspartate 20, aspartate 26, aspartate 73, aspartate 75, and aspartate 81. The tract at residues threonine 123–serine 144 is disordered.

It depends on Ca(2+) as a cofactor.

The chain is Elicitor-responsive protein 3 (ERG3) from Oryza sativa subsp. indica (Rice).